Consider the following 375-residue polypeptide: Succinyl-diaminopimelate desuccinylase (375 aa).

H66 contributes to the Zn(2+) binding site. D68 is an active-site residue. Zn(2+) is bound at residue D99. E133 acts as the Proton acceptor in catalysis. The Zn(2+) site is built by E134, E162, and H348.

Belongs to the peptidase M20A family. DapE subfamily. Homodimer. It depends on Zn(2+) as a cofactor. The cofactor is Co(2+).

The enzyme catalyses N-succinyl-(2S,6S)-2,6-diaminopimelate + H2O = (2S,6S)-2,6-diaminopimelate + succinate. Its pathway is amino-acid biosynthesis; L-lysine biosynthesis via DAP pathway; LL-2,6-diaminopimelate from (S)-tetrahydrodipicolinate (succinylase route): step 3/3. Its function is as follows. Catalyzes the hydrolysis of N-succinyl-L,L-diaminopimelic acid (SDAP), forming succinate and LL-2,6-diaminopimelate (DAP), an intermediate involved in the bacterial biosynthesis of lysine and meso-diaminopimelic acid, an essential component of bacterial cell walls. This chain is Succinyl-diaminopimelate desuccinylase, found in Aeromonas hydrophila subsp. hydrophila (strain ATCC 7966 / DSM 30187 / BCRC 13018 / CCUG 14551 / JCM 1027 / KCTC 2358 / NCIMB 9240 / NCTC 8049).